The sequence spans 289 residues: Acetyl-coenzyme A carboxylase carboxyl transferase subunit beta (289 aa).

In terms of domain architecture, CoA carboxyltransferase N-terminal spans 28–289 (VMTKCPKCKK…QGGEMAVWQS (262 aa)). Positions 32, 35, 51, and 54 each coordinate Zn(2+). The C4-type zinc-finger motif lies at 32-54 (CPKCKKIMYTKELLKNLKVCVNC).

The protein belongs to the AccD/PCCB family. Acetyl-CoA carboxylase is a heterohexamer composed of biotin carboxyl carrier protein (AccB), biotin carboxylase (AccC) and two subunits each of ACCase subunit alpha (AccA) and ACCase subunit beta (AccD). It depends on Zn(2+) as a cofactor.

It localises to the cytoplasm. It catalyses the reaction N(6)-carboxybiotinyl-L-lysyl-[protein] + acetyl-CoA = N(6)-biotinyl-L-lysyl-[protein] + malonyl-CoA. The protein operates within lipid metabolism; malonyl-CoA biosynthesis; malonyl-CoA from acetyl-CoA: step 1/1. In terms of biological role, component of the acetyl coenzyme A carboxylase (ACC) complex. Biotin carboxylase (BC) catalyzes the carboxylation of biotin on its carrier protein (BCCP) and then the CO(2) group is transferred by the transcarboxylase to acetyl-CoA to form malonyl-CoA. This is Acetyl-coenzyme A carboxylase carboxyl transferase subunit beta from Bacillus cereus (strain AH187).